Here is a 214-residue protein sequence, read N- to C-terminus: uncharacterized protein (214 aa).

A run of 7 helical transmembrane segments spans residues 4-23 (VSIV…FSSF), 35-57 (SFVH…LGYY), 67-89 (QWMR…FLFT), 96-118 (VSLV…VHVY), 128-150 (ARVM…VSFS), 155-177 (LPLL…SATV), and 187-209 (TVVY…FFAV).

It localises to the cell membrane. This is an uncharacterized protein from Treponema pallidum (strain Nichols).